We begin with the raw amino-acid sequence, 334 residues long: Biotin synthase (334 aa).

The 231-residue stretch at 55–285 (GSSGSIHACS…VHPRKIIKIA (231 aa)) folds into the Radical SAM core domain. [4Fe-4S] cluster-binding residues include cysteine 73, cysteine 77, and cysteine 80. Cysteine 152, cysteine 213, and lysine 283 together coordinate [2Fe-2S] cluster.

This sequence belongs to the radical SAM superfamily. Biotin synthase family. As to quaternary structure, homodimer. [4Fe-4S] cluster serves as cofactor. The cofactor is [2Fe-2S] cluster.

The catalysed reaction is (4R,5S)-dethiobiotin + (sulfur carrier)-SH + 2 reduced [2Fe-2S]-[ferredoxin] + 2 S-adenosyl-L-methionine = (sulfur carrier)-H + biotin + 2 5'-deoxyadenosine + 2 L-methionine + 2 oxidized [2Fe-2S]-[ferredoxin]. It functions in the pathway cofactor biosynthesis; biotin biosynthesis; biotin from 7,8-diaminononanoate: step 2/2. In terms of biological role, catalyzes the conversion of dethiobiotin (DTB) to biotin by the insertion of a sulfur atom into dethiobiotin via a radical-based mechanism. This is Biotin synthase from Chlorobium phaeobacteroides (strain DSM 266 / SMG 266 / 2430).